Here is a 280-residue protein sequence, read N- to C-terminus: DegV domain-containing protein TTE1491 (280 aa).

The 276-residue stretch at 4–279 (IAIVTDSLSD…PDAAGVFFEE (276 aa)) folds into the DegV domain. Hexadecanoate-binding residues include Thr61 and Ser93.

Its function is as follows. May bind long-chain fatty acids, such as palmitate, and may play a role in lipid transport or fatty acid metabolism. The chain is DegV domain-containing protein TTE1491 from Caldanaerobacter subterraneus subsp. tengcongensis (strain DSM 15242 / JCM 11007 / NBRC 100824 / MB4) (Thermoanaerobacter tengcongensis).